The primary structure comprises 336 residues: Ferredoxin--NADP reductase (336 aa).

FAD is bound by residues aspartate 37, glutamine 45, tyrosine 50, valine 90, phenylalanine 124, aspartate 286, and threonine 327.

This sequence belongs to the ferredoxin--NADP reductase type 2 family. In terms of assembly, homodimer. FAD serves as cofactor.

The enzyme catalyses 2 reduced [2Fe-2S]-[ferredoxin] + NADP(+) + H(+) = 2 oxidized [2Fe-2S]-[ferredoxin] + NADPH. The sequence is that of Ferredoxin--NADP reductase from Enterococcus faecalis (strain ATCC 700802 / V583).